We begin with the raw amino-acid sequence, 623 residues long: Putative pentatricopeptide repeat-containing protein At3g11460, mitochondrial (623 aa).

The transit peptide at 1–35 (MIVVTSFVRNSAVAAVASTPWNVRLRELAYQSLFS) directs the protein to the mitochondrion. 12 PPR repeats span residues 17–51 (ASTP…GSSP), 52–86 (DAFS…GCET), 87–117 (EPFV…NPQS), 120–154 (LSVC…GVSV), 155–189 (DSVT…GLDS), 190–220 (EVAV…MPVK), 221–255 (GLIT…GVCP), 256–290 (DPFT…GFVP), 291–321 (NVFV…MPVK), 322–356 (SLVS…GIRP), 357–387 (DGAV…MKRE), and 393–423 (GPEH…MPVE). Residues 428 to 503 (VWGALLGACK…KPGYSYVEHK (76 aa)) are type E motif. Residues 504 to 535 (GRVHLFLAGDRSHEQTEEVHRMLDELETSVME) are type E(+) motif. The interval 536–623 (LAGNMDCDRG…DGVCSCKDYW (88 aa)) is type DYW motif.

This sequence belongs to the PPR family. PCMP-H subfamily. In terms of assembly, interacts with MORF8/RIP1.

Its subcellular location is the mitochondrion. Its function is as follows. Involved in C-to-U editing of mitochondrial RNA. Required specifically for editing the mitochondrial NAD2 transcript. In Arabidopsis thaliana (Mouse-ear cress), this protein is Putative pentatricopeptide repeat-containing protein At3g11460, mitochondrial (PCMP-H52).